We begin with the raw amino-acid sequence, 272 residues long: METYAVFGNPIAHSKSPFIHQQFAQQLNIEHPYGRVLAPINDFINTLNTFFSAGGKGANVTVPFKEEAFARADELTERAALAGAVNTLKRLEDGRLLGDNTDGIGLLSDLERLSFIRPGLRILLIGAGGASRGVLLPLLSLDRAVTITNRTVSRAEELTKLFAHTGSIQALGMDELEGHEFDLIINATSSGISGDIPAIPSSLIHPGIYCYDMFYQKGKTPFLAWCEQRGSKRNADGLGMLVAQAAHAFLLWHGVLPDVEPVIKLLQQELSA.

Shikimate is bound by residues 14-16 (SKS) and Thr-61. Lys-65 functions as the Proton acceptor in the catalytic mechanism. An NADP(+)-binding site is contributed by Glu-77. Positions 86 and 102 each coordinate shikimate. Residues 126–130 (GAGGA), 149–154 (NRTVSR), and Met-213 contribute to the NADP(+) site. A shikimate-binding site is contributed by Tyr-215. NADP(+) is bound at residue Gly-237.

The protein belongs to the shikimate dehydrogenase family. As to quaternary structure, homodimer.

The enzyme catalyses shikimate + NADP(+) = 3-dehydroshikimate + NADPH + H(+). Its pathway is metabolic intermediate biosynthesis; chorismate biosynthesis; chorismate from D-erythrose 4-phosphate and phosphoenolpyruvate: step 4/7. Involved in the biosynthesis of the chorismate, which leads to the biosynthesis of aromatic amino acids. Catalyzes the reversible NADPH linked reduction of 3-dehydroshikimate (DHSA) to yield shikimate (SA). This Escherichia coli O81 (strain ED1a) protein is Shikimate dehydrogenase (NADP(+)).